The sequence spans 344 residues: AA9 family lytic polysaccharide monooxygenase cel61A (344 aa).

Positions 1–21 (MIQKLSNLLVTALAVATGVVG) are cleaved as a signal peptide. Histidine 22 lines the Cu(2+) pocket. Intrachain disulfides connect cysteine 77-cysteine 198 and cysteine 118-cysteine 122. Asparagine 80 carries N-linked (GlcNAc...) asparagine glycosylation. Histidine 107 contributes to the Cu(2+) binding site. Residue asparagine 158 is glycosylated (N-linked (GlcNAc...) asparagine). Residues histidine 184 and glutamine 193 each coordinate O2. Tyrosine 195 lines the Cu(2+) pocket. The interval 262–310 (ATASATVPGGGSGPTSRTTTTARTTQASSRPSSTPPATTSAPAGGPTQT) is disordered. Residues 275 to 310 (PTSRTTTTARTTQASSRPSSTPPATTSAPAGGPTQT) show a composition bias toward low complexity. Residues 307 to 343 (PTQTLYGQCGGSGYSGPTRCAPPATCSTLNPYYAQCL) form the CBM1 domain.

Belongs to the polysaccharide monooxygenase AA9 family. The cofactor is Cu(2+).

Its subcellular location is the secreted. It catalyses the reaction [(1-&gt;4)-beta-D-glucosyl]n+m + reduced acceptor + O2 = 4-dehydro-beta-D-glucosyl-[(1-&gt;4)-beta-D-glucosyl]n-1 + [(1-&gt;4)-beta-D-glucosyl]m + acceptor + H2O.. Lytic polysaccharide monooxygenase (LPMO) that depolymerizes crystalline and amorphous polysaccharides via the oxidation of scissile alpha- or beta-(1-4)-glycosidic bonds, yielding C1 or C4 oxidation products. Catalysis by LPMOs requires the reduction of the active-site copper from Cu(II) to Cu(I) by a reducing agent and H(2)O(2) or O(2) as a cosubstrate. Shows activity on beta-glucan and amorphous cellulose. Does not show beta-1-3-glucanase, beta-1,6-glucanase, mannanase, xylanase, beta-1,3-galactosidase, amylase, pectinase, nor chitinase activities. This is AA9 family lytic polysaccharide monooxygenase cel61A from Hypocrea jecorina (Trichoderma reesei).